Consider the following 462-residue polypeptide: Putative E3 ubiquitin-protein ligase XBAT35 (462 aa).

ANK repeat units lie at residues 6 to 35 (SKGELLYQQVSYGNSEGIRALHRDGGDLEW), 39 to 69 (EGKTPLILACMNSELFDVAKTLIELGSNVNA), and 75 to 104 (HAGTPLHHAAKRGLENTVKLLLSHGANPLV). Disordered stretches follow at residues 277 to 341 (HPPV…GKAS) and 356 to 402 (SSPS…EGER). Positions 304–317 (SLHTTMSDPSNLNH) are enriched in polar residues. A compositionally biased stretch (low complexity) spans 319–341 (SIGQASSSSGPSSSTAPPSGKAS). Residues 411–450 (CAICLDAPSEAVCVPCGHVAGCMSCLKEIKSKNWGCPVCR) form an RING-type zinc finger.

It carries out the reaction S-ubiquitinyl-[E2 ubiquitin-conjugating enzyme]-L-cysteine + [acceptor protein]-L-lysine = [E2 ubiquitin-conjugating enzyme]-L-cysteine + N(6)-ubiquitinyl-[acceptor protein]-L-lysine.. Its pathway is protein modification; protein ubiquitination. Functionally, no E3 ubiquitin-protein ligase activity observed when associated with the E2 enzyme UBC8 in vitro. This chain is Putative E3 ubiquitin-protein ligase XBAT35 (XBAT35), found in Arabidopsis thaliana (Mouse-ear cress).